The chain runs to 498 residues: MRINPTTSDPEVSIREKKNLGRISQIIGPVLDVAFPPGKMPNIYNALVVKGRDTLGQEINVTCEVQQLLGNNRVRAVAMSATEGLKRGMDVVDMGNPLSVPVGGATLGRIFNVLGEPVDNLGPVDTRTTSPIHKSAPAFIQLDTKLSIFETGIKVVDLLAPYRRGGKIGLFGGAGVGKTVLIMELINNIAKAHGGVSVFGGVGERTREGNDLYMEMKESGVINEQNLAESKVALVYGQMNEPPGARMRVGLTALTMAEYFRDVNEQDVLLFIDNIFRFVQAGSEVSALLGRMPSAVGYQPTLSTEMGTLQERITSTKKGSITSIQAVYVPADDLTDPAPATTFAHLDATTVLSRGLAAKGIYPAVDPLDSTSTMLQPRIVGEEHYETAQQVKQTLQRYKELQDIIAILGLDELSEEDRLTVARARKIERFLSQPFFVAEVFTGSPGKYVGLAETIRGFKLILSGEFDSLPEQAFYLVGNIDEATAKATNLEMESKLKK.

A Phosphothreonine modification is found at Thr-6. Residue Ser-13 is modified to Phosphoserine. 172-179 contributes to the ATP binding site; sequence GGAGVGKT.

The protein belongs to the ATPase alpha/beta chains family. F-type ATPases have 2 components, CF(1) - the catalytic core - and CF(0) - the membrane proton channel. CF(1) has five subunits: alpha(3), beta(3), gamma(1), delta(1), epsilon(1). CF(0) has four main subunits: a(1), b(1), b'(1) and c(9-12).

It localises to the plastid. The protein localises to the chloroplast thylakoid membrane. It catalyses the reaction ATP + H2O + 4 H(+)(in) = ADP + phosphate + 5 H(+)(out). Its function is as follows. Produces ATP from ADP in the presence of a proton gradient across the membrane. The catalytic sites are hosted primarily by the beta subunits. This Olimarabidopsis pumila (Dwarf rocket) protein is ATP synthase subunit beta, chloroplastic.